A 108-amino-acid chain; its full sequence is Peptidyl-prolyl cis-trans isomerase FKBP1A (108 aa).

In terms of domain architecture, PPIase FKBP-type spans 20 to 108 (GQTVVVHYVG…TFDVELLRLE (89 aa)).

The protein belongs to the FKBP-type PPIase family. FKBP1 subfamily.

Its subcellular location is the cytoplasm. The catalysed reaction is [protein]-peptidylproline (omega=180) = [protein]-peptidylproline (omega=0). Its activity is regulated as follows. Inhibited by both FK506 and rapamycin. In terms of biological role, keeps in an inactive conformation TGFBR1, the TGF-beta type I serine/threonine kinase receptor, preventing TGF-beta receptor activation in absence of ligand. May modulate the RYR1 calcium channel activity. PPIases accelerate the folding of proteins. It catalyzes the cis-trans isomerization of proline imidic peptide bonds in oligopeptides. The chain is Peptidyl-prolyl cis-trans isomerase FKBP1A (fkbp1a) from Xenopus laevis (African clawed frog).